Consider the following 142-residue polypeptide: Large ribosomal subunit protein uL11 (142 aa).

The protein belongs to the universal ribosomal protein uL11 family. In terms of assembly, part of the ribosomal stalk of the 50S ribosomal subunit. Interacts with L10 and the large rRNA to form the base of the stalk. L10 forms an elongated spine to which L12 dimers bind in a sequential fashion forming a multimeric L10(L12)X complex. One or more lysine residues are methylated.

Functionally, forms part of the ribosomal stalk which helps the ribosome interact with GTP-bound translation factors. This chain is Large ribosomal subunit protein uL11, found in Vibrio vulnificus (strain YJ016).